We begin with the raw amino-acid sequence, 509 residues long: MLASACTHSWRTGRFLNRIIKSSVQTLTAAALIANLSACSRPTTLEKIEQEGALHVITRNAPTTYYEDRDGPAGFEYELAKKFSEYLGVELRLRVANDLDEAYTVLEQNYTNLAAVGLSRLAASAQSPSLRFSSEYLEIQPLVLYRNGSAKPKQLDDLIGGKLIIPAQTAQAEFLRQVKDSRLPDMDWLEAADMETSEIMRLIEEGEYEYAIVNSREYEIHKAMFPRAREAFSLMEPLQISWIFPPGEDMSLIQKADEFIKQIKDDGTLIYLQERYFGHVNQLNYVGARTYISHIKDRLPKFEPTFKQAAEKFEVDWRLLASIGYQESHWRPYATSPTGVRGLMMLTLPTAKEMNVKNRLNPEQSIFGGAGYFSRIKQRISERITEPDRTWMALAAYNVGLGHLEDARALAKAQGLDQDKWIDVKQALPLLQQKKWYVKTRYGYARGWEPVHYVQNIRRYYDVLVWMTQPSAEDGSVAQNEDAPTTGADGTTEETPAIPAPFRVTPPML.

Residues Met1–Ser40 form the signal peptide. Residues Arg41–Val280 form a non-LT domain region. The LT domain stretch occupies residues Asn281–Leu509. Glu327 is an active-site residue. The tract at residues Asp474–Ala500 is disordered.

It in the N-terminal section; belongs to the bacterial solute-binding protein 3 family. In the C-terminal section; belongs to the transglycosylase Slt family.

It localises to the cell outer membrane. It catalyses the reaction Exolytic cleavage of the (1-&gt;4)-beta-glycosidic linkage between N-acetylmuramic acid (MurNAc) and N-acetylglucosamine (GlcNAc) residues in peptidoglycan, from either the reducing or the non-reducing ends of the peptidoglycan chains, with concomitant formation of a 1,6-anhydrobond in the MurNAc residue.. In terms of biological role, murein-degrading enzyme that degrades murein glycan strands and insoluble, high-molecular weight murein sacculi, with the concomitant formation of a 1,6-anhydromuramoyl product. Lytic transglycosylases (LTs) play an integral role in the metabolism of the peptidoglycan (PG) sacculus. Their lytic action creates space within the PG sacculus to allow for its expansion as well as for the insertion of various structures such as secretion systems and flagella. The chain is Membrane-bound lytic murein transglycosylase F from Hahella chejuensis (strain KCTC 2396).